The following is a 268-amino-acid chain: Very-long-chain aldehyde decarbonylase GL1-8 (268 aa).

4 consecutive transmembrane segments (helical) span residues 26-46 (IGTF…SLLF), 70-90 (CVVR…ILSY), 107-127 (WTVV…IFYW), and 164-184 (ILFL…HLFT). Residues 114–249 (VLFFFVLEDF…FIYMDWLFGT (136 aa)) enclose the Fatty acid hydroxylase domain.

The protein belongs to the sterol desaturase family. Homodimer.

It localises to the endoplasmic reticulum membrane. The enzyme catalyses a long-chain fatty aldehyde + 2 NADPH + O2 + H(+) = a long-chain alkane + formate + 2 NADP(+) + H2O. Functionally, aldehyde decarbonylase involved in the conversion of aldehydes to alkanes. Core component of a very-long-chain alkane synthesis complex. The chain is Very-long-chain aldehyde decarbonylase GL1-8 from Oryza sativa subsp. indica (Rice).